Here is a 165-residue protein sequence, read N- to C-terminus: Large ribosomal subunit protein uL10 (165 aa).

The protein belongs to the universal ribosomal protein uL10 family. In terms of assembly, part of the ribosomal stalk of the 50S ribosomal subunit. The N-terminus interacts with L11 and the large rRNA to form the base of the stalk. The C-terminus forms an elongated spine to which L12 dimers bind in a sequential fashion forming a multimeric L10(L12)X complex.

In terms of biological role, forms part of the ribosomal stalk, playing a central role in the interaction of the ribosome with GTP-bound translation factors. The polypeptide is Large ribosomal subunit protein uL10 (rplJ) (Halalkalibacterium halodurans (strain ATCC BAA-125 / DSM 18197 / FERM 7344 / JCM 9153 / C-125) (Bacillus halodurans)).